Reading from the N-terminus, the 302-residue chain is Sulfate adenylyltransferase subunit 2 (302 aa).

The protein belongs to the PAPS reductase family. CysD subfamily. As to quaternary structure, heterodimer composed of CysD, the smaller subunit, and CysN.

The catalysed reaction is sulfate + ATP + H(+) = adenosine 5'-phosphosulfate + diphosphate. The protein operates within sulfur metabolism; hydrogen sulfide biosynthesis; sulfite from sulfate: step 1/3. Its function is as follows. With CysN forms the ATP sulfurylase (ATPS) that catalyzes the adenylation of sulfate producing adenosine 5'-phosphosulfate (APS) and diphosphate, the first enzymatic step in sulfur assimilation pathway. APS synthesis involves the formation of a high-energy phosphoric-sulfuric acid anhydride bond driven by GTP hydrolysis by CysN coupled to ATP hydrolysis by CysD. This is Sulfate adenylyltransferase subunit 2 from Salmonella paratyphi A (strain AKU_12601).